Reading from the N-terminus, the 61-residue chain is uncharacterized protein (61 aa).

The stretch at 10–61 forms a coiled coil; that stretch reads YEEENDNEDFEEEVELSREDLNQIINELAPFLIKLLTDLTELTQKKEESENE.

This is an uncharacterized protein from Acidianus bottle-shaped virus (isolate Italy/Pozzuoli) (ABV).